We begin with the raw amino-acid sequence, 477 residues long: Glycogen synthase (477 aa).

Position 15 (K15) interacts with ADP-alpha-D-glucose.

The protein belongs to the glycosyltransferase 1 family. Bacterial/plant glycogen synthase subfamily.

It catalyses the reaction [(1-&gt;4)-alpha-D-glucosyl](n) + ADP-alpha-D-glucose = [(1-&gt;4)-alpha-D-glucosyl](n+1) + ADP + H(+). It participates in glycan biosynthesis; glycogen biosynthesis. In terms of biological role, synthesizes alpha-1,4-glucan chains using ADP-glucose. This is Glycogen synthase from Streptococcus pneumoniae (strain Hungary19A-6).